The primary structure comprises 425 residues: Riboflavin biosynthesis protein RibBA (425 aa).

Residues 1–204 (MTRLDSVERA…IADLIEWRRK (204 aa)) form a DHBP synthase region. D-ribulose 5-phosphate is bound by residues 28–29 (RE), D33, 141–145 (RPGHT), and E165. E29 contributes to the Mg(2+) binding site. H144 contacts Mg(2+). Residues 205–425 (HEKHIERVAE…HLPGEFGGAL (221 aa)) form a GTP cyclohydrolase II region. 259–263 (RVHSE) serves as a coordination point for GTP. Positions 264, 275, and 277 each coordinate Zn(2+). Residues Q280, 303–305 (EGR), and T325 contribute to the GTP site. D337 serves as the catalytic Proton acceptor; for GTP cyclohydrolase activity. The Nucleophile; for GTP cyclohydrolase activity role is filled by R339. GTP-binding residues include T360 and K365.

In the N-terminal section; belongs to the DHBP synthase family. This sequence in the C-terminal section; belongs to the GTP cyclohydrolase II family. Mg(2+) is required as a cofactor. Requires Mn(2+) as cofactor. The cofactor is Zn(2+).

It catalyses the reaction D-ribulose 5-phosphate = (2S)-2-hydroxy-3-oxobutyl phosphate + formate + H(+). It carries out the reaction GTP + 4 H2O = 2,5-diamino-6-hydroxy-4-(5-phosphoribosylamino)-pyrimidine + formate + 2 phosphate + 3 H(+). It participates in cofactor biosynthesis; riboflavin biosynthesis; 2-hydroxy-3-oxobutyl phosphate from D-ribulose 5-phosphate: step 1/1. The protein operates within cofactor biosynthesis; riboflavin biosynthesis; 5-amino-6-(D-ribitylamino)uracil from GTP: step 1/4. Functionally, catalyzes the conversion of D-ribulose 5-phosphate to formate and 3,4-dihydroxy-2-butanone 4-phosphate. In terms of biological role, catalyzes the conversion of GTP to 2,5-diamino-6-ribosylamino-4(3H)-pyrimidinone 5'-phosphate (DARP), formate and pyrophosphate. This chain is Riboflavin biosynthesis protein RibBA, found in Mycobacterium ulcerans (strain Agy99).